Reading from the N-terminus, the 154-residue chain is Large ribosomal subunit protein uL30 (154 aa).

The interval 114–139 (PTLRLHPPRGGHDGIKHPTKEGGQLG) is disordered. Basic and acidic residues predominate over residues 123–133 (GGHDGIKHPTK).

The protein belongs to the universal ribosomal protein uL30 family. As to quaternary structure, part of the 50S ribosomal subunit.

The chain is Large ribosomal subunit protein uL30 from Natronomonas pharaonis (strain ATCC 35678 / DSM 2160 / CIP 103997 / JCM 8858 / NBRC 14720 / NCIMB 2260 / Gabara) (Halobacterium pharaonis).